The chain runs to 156 residues: 6,7-dimethyl-8-ribityllumazine synthase (156 aa).

5-amino-6-(D-ribitylamino)uracil is bound by residues F23, 57–59 (AFE), and 81–83 (AVI). Residue 86–87 (AT) participates in (2S)-2-hydroxy-3-oxobutyl phosphate binding. H89 (proton donor) is an active-site residue. N114 provides a ligand contact to 5-amino-6-(D-ribitylamino)uracil. R128 contacts (2S)-2-hydroxy-3-oxobutyl phosphate.

The protein belongs to the DMRL synthase family.

The catalysed reaction is (2S)-2-hydroxy-3-oxobutyl phosphate + 5-amino-6-(D-ribitylamino)uracil = 6,7-dimethyl-8-(1-D-ribityl)lumazine + phosphate + 2 H2O + H(+). It functions in the pathway cofactor biosynthesis; riboflavin biosynthesis; riboflavin from 2-hydroxy-3-oxobutyl phosphate and 5-amino-6-(D-ribitylamino)uracil: step 1/2. Functionally, catalyzes the formation of 6,7-dimethyl-8-ribityllumazine by condensation of 5-amino-6-(D-ribitylamino)uracil with 3,4-dihydroxy-2-butanone 4-phosphate. This is the penultimate step in the biosynthesis of riboflavin. In Aliarcobacter butzleri (strain RM4018) (Arcobacter butzleri), this protein is 6,7-dimethyl-8-ribityllumazine synthase.